The primary structure comprises 138 residues: Cysteine desulfuration protein SufE (138 aa).

Catalysis depends on cysteine 51, which acts as the Cysteine persulfide intermediate.

It belongs to the SufE family. As to quaternary structure, homodimer. Interacts with SufS.

It is found in the cytoplasm. The protein operates within cofactor biosynthesis; iron-sulfur cluster biosynthesis. Its function is as follows. Participates in cysteine desulfuration mediated by SufS. Cysteine desulfuration mobilizes sulfur from L-cysteine to yield L-alanine and constitutes an essential step in sulfur metabolism for biosynthesis of a variety of sulfur-containing biomolecules. Functions as a sulfur acceptor for SufS, by mediating the direct transfer of the sulfur atom from the S-sulfanylcysteine of SufS, an intermediate product of cysteine desulfuration process. The polypeptide is Cysteine desulfuration protein SufE (Cronobacter sakazakii (strain ATCC BAA-894) (Enterobacter sakazakii)).